The sequence spans 704 residues: MARTTPIARYRNIGISAHIDAGKTTTTERILFYTGVNHKIGEVHDGAATMDWMEQEQERGITITSAATTAFWSGMAKQYEPHRINIIDTPGHVDFTIEVERSMRVLDGAVMVYCAVGGVQPQSETVWRQANKYKVPRIAFVNKMDRMGANFLKVVNQIKTRLGANPVPLQLAIGAEEHFTGVVDLVKMKAINWNDADQGVTFEYEDIPADMVELANEWHQNLIESAAEASEELMEKYLGGEELTEEEIKGALRQRVLNNEIILVTCGSAFKNKGVQAMLDAVIDYLPSPVDVPAINGILDDGKDTPAERHASDDEPFSALAFKIATDPFVGNLTFFRVYSGVVNSGDTVLNSVKAARERFGRIVQMHANKREEIKEVRAGDIAAAIGLKDVTTGDTLCDPDAPIILERMEFPEPVISIAVEPKTKADQEKMGLALGRLAKEDPSFRVWTDEESNQTIIAGMGELHLDIIVDRMKREFNVEANVGKPQVAYRETIRQKVTDVEGKHAKQSGGRGQYGHVVIDMYPLEPGSNPKGYEFINDIKGGVIPGEYIPAVDKGIQEQLKAGPLAGYPVVDMGIRLHFGSYHDVDSSELAFKLAASIAFKEGFKKAKPVLLEPIMKVEVETPEENTGDVIGDLSRRRGMLKGQESEVTGVKIHAEVPLSEMFGYATQLRSLTKGRASYTMEFLKYDEAPSNVAQAVIEARGK.

The region spanning 8 to 290 (ARYRNIGISA…AVIDYLPSPV (283 aa)) is the tr-type G domain. Residues 17–24 (AHIDAGKT), 88–92 (DTPGH), and 142–145 (NKMD) contribute to the GTP site. An N6-acetyllysine mark is found at Lys504 and Lys643.

This sequence belongs to the TRAFAC class translation factor GTPase superfamily. Classic translation factor GTPase family. EF-G/EF-2 subfamily.

It localises to the cytoplasm. Functionally, catalyzes the GTP-dependent ribosomal translocation step during translation elongation. During this step, the ribosome changes from the pre-translocational (PRE) to the post-translocational (POST) state as the newly formed A-site-bound peptidyl-tRNA and P-site-bound deacylated tRNA move to the P and E sites, respectively. Catalyzes the coordinated movement of the two tRNA molecules, the mRNA and conformational changes in the ribosome. The chain is Elongation factor G from Escherichia coli O17:K52:H18 (strain UMN026 / ExPEC).